The sequence spans 956 residues: UvrABC system protein A (956 aa).

Residue 33 to 40 (GLSGSGKS) participates in ATP binding. The C4-type zinc finger occupies 252–279 (CPYCGFSVGELEPRMFSFNSPFGACPTC). 2 ABC transporter domains span residues 309 to 587 (WRPI…KNSI) and 607 to 936 (GNGL…KYLK). 639–646 (GVSGSGKS) is a binding site for ATP. A C4-type zinc finger spans residues 738 to 764 (CEACKGDGIIKIEMHFLPDVYVPCEVC).

It belongs to the ABC transporter superfamily. UvrA family. Forms a heterotetramer with UvrB during the search for lesions.

It is found in the cytoplasm. Its function is as follows. The UvrABC repair system catalyzes the recognition and processing of DNA lesions. UvrA is an ATPase and a DNA-binding protein. A damage recognition complex composed of 2 UvrA and 2 UvrB subunits scans DNA for abnormalities. When the presence of a lesion has been verified by UvrB, the UvrA molecules dissociate. This chain is UvrABC system protein A, found in Listeria innocua serovar 6a (strain ATCC BAA-680 / CLIP 11262).